We begin with the raw amino-acid sequence, 176 residues long: ATP synthase subunit delta (176 aa).

The protein belongs to the ATPase delta chain family. F-type ATPases have 2 components, F(1) - the catalytic core - and F(0) - the membrane proton channel. F(1) has five subunits: alpha(3), beta(3), gamma(1), delta(1), epsilon(1). F(0) has three main subunits: a(1), b(2) and c(10-14). The alpha and beta chains form an alternating ring which encloses part of the gamma chain. F(1) is attached to F(0) by a central stalk formed by the gamma and epsilon chains, while a peripheral stalk is formed by the delta and b chains.

It is found in the cell inner membrane. In terms of biological role, f(1)F(0) ATP synthase produces ATP from ADP in the presence of a proton or sodium gradient. F-type ATPases consist of two structural domains, F(1) containing the extramembraneous catalytic core and F(0) containing the membrane proton channel, linked together by a central stalk and a peripheral stalk. During catalysis, ATP synthesis in the catalytic domain of F(1) is coupled via a rotary mechanism of the central stalk subunits to proton translocation. This protein is part of the stalk that links CF(0) to CF(1). It either transmits conformational changes from CF(0) to CF(1) or is implicated in proton conduction. In Polaromonas sp. (strain JS666 / ATCC BAA-500), this protein is ATP synthase subunit delta.